The chain runs to 129 residues: Small ribosomal subunit protein eS6 (129 aa).

Residues 106-129 (QINASIVSRGEQSIDDLLGGEDDE) form a disordered region.

This sequence belongs to the eukaryotic ribosomal protein eS6 family.

The sequence is that of Small ribosomal subunit protein eS6 from Natronomonas pharaonis (strain ATCC 35678 / DSM 2160 / CIP 103997 / JCM 8858 / NBRC 14720 / NCIMB 2260 / Gabara) (Halobacterium pharaonis).